A 287-amino-acid polypeptide reads, in one-letter code: Short-chain dehydrogenase virD (287 aa).

Residues Val-10, Thr-36, Asp-57, Asn-85, Tyr-149, Lys-153, Val-182, and Thr-184 each coordinate NADP(+). Residue Tyr-149 is the Proton acceptor of the active site. The active-site Lowers pKa of active site Tyr is Lys-153.

It belongs to the short-chain dehydrogenases/reductases (SDR) family.

It functions in the pathway secondary metabolite biosynthesis. Short-chain dehydrogenase; part of the gene cluster that mediates the biosynthesis of virensols and trichoxide, fungal natural products that contain or are derived from a salicylaldehyde core. The pathway begins with the synthesis of the reduced chain in virensol C by the highly reducing polyketide synthase virA via condensation of one acetate and 8 malonate units. VirA has interesting programming rules since the first 2 ketides are fully reduced, the 3 following ketides undergo beta-dehydration, and the last 3 ketides are only reduced to beta-hydroxys to yield the trihydroxy portion. The production of aldehyde virensol C by virA alone is surprising, since virA does not contain a reductase (R) domain that is typically associated with reductive product release in HRPKS. The cupin-domain enzyme virC is involved in enhancing virA product turnover. The short-chain dehydrogenase virB then oxidizes the C-7 alcohol of virensol C to a ketone, yielding virensol D. Virensol D is further transformed to salicylaldehyde 5-deoxyaurocitrin by the short-chain dehydrogenase virD. VirD catalyzes the dehydrogenation of C-3 to form the beta-ketone aldehyde, which is followed by the generation of the nucleophilic C-2 that is required for the intramolecular aldol condensation between C-2 and C-7, itself followed by dehydration and aromatization which leads to salicylaldehyde 5-deoxyaurocitrin. While the dehydrogenation of virensol D is definitely catalyzed by virD, the aldol condensation and dehydration may be uncatalyzed or assisted by virD. The short chain dehydrogenase virG then converts salicylaldehyde 5-deoxyaurocitrin into virensol B which is further hydroxylated by the cytochrome P450 monooxygenase virE to yield the hydroquinone virensol A. VirI then may oxidize virensol A to form the quinone, while virH performs the epoxidation. Finally, the two remaining short-chain dehydrogenases, virK and virL, are probably responsible for reducing the ketones to the corresponding alcohols to furnish the epoxycyclohexanol structure in trichoxide. The polypeptide is Short-chain dehydrogenase virD (Hypocrea virens (strain Gv29-8 / FGSC 10586) (Gliocladium virens)).